We begin with the raw amino-acid sequence, 649 residues long: Serine/threonine kinase-like domain-containing protein STKLD1 (649 aa).

Residues 1–13 (MLGPESDGRRPTQ) show a composition bias toward basic and acidic residues. The interval 1–23 (MLGPESDGRRPTQGERGPGYPGE) is disordered. One can recognise a Protein kinase domain in the interval 28–379 (YQVLYQLNPG…CNQAITSAVL (352 aa)). ATP is bound by residues 34 to 42 (LNPGALGVN) and lysine 57. The interval 621–640 (FSKPGLPPGGSPQPGCTASG) is disordered.

This sequence belongs to the protein kinase superfamily. Ser/Thr protein kinase family. STKL subfamily.

The protein is Serine/threonine kinase-like domain-containing protein STKLD1 (STKLD1) of Macaca fascicularis (Crab-eating macaque).